The sequence spans 407 residues: Peptidase T (407 aa).

H82 lines the Zn(2+) pocket. The active site involves D84. D143 contacts Zn(2+). The Proton acceptor role is filled by E177. Zn(2+)-binding residues include E178, D200, and H382.

This sequence belongs to the peptidase M20B family. It depends on Zn(2+) as a cofactor.

It is found in the cytoplasm. The catalysed reaction is Release of the N-terminal residue from a tripeptide.. Functionally, cleaves the N-terminal amino acid of tripeptides. The sequence is that of Peptidase T from Streptococcus pyogenes serotype M6 (strain ATCC BAA-946 / MGAS10394).